A 404-amino-acid chain; its full sequence is Imidazolonepropionase (404 aa).

Histidine 70 and histidine 72 together coordinate Fe(3+). The Zn(2+) site is built by histidine 70 and histidine 72. Positions 79, 142, and 174 each coordinate 4-imidazolone-5-propanoate. Tyrosine 142 is an N-formimidoyl-L-glutamate binding site. Histidine 234 contributes to the Fe(3+) binding site. Residue histidine 234 participates in Zn(2+) binding. Residue glutamate 237 participates in 4-imidazolone-5-propanoate binding. Aspartate 308 provides a ligand contact to Fe(3+). Residue aspartate 308 coordinates Zn(2+).

It belongs to the metallo-dependent hydrolases superfamily. HutI family. It depends on Zn(2+) as a cofactor. Requires Fe(3+) as cofactor.

Its subcellular location is the cytoplasm. The enzyme catalyses 4-imidazolone-5-propanoate + H2O = N-formimidoyl-L-glutamate. The protein operates within amino-acid degradation; L-histidine degradation into L-glutamate; N-formimidoyl-L-glutamate from L-histidine: step 3/3. In terms of biological role, catalyzes the hydrolytic cleavage of the carbon-nitrogen bond in imidazolone-5-propanoate to yield N-formimidoyl-L-glutamate. It is the third step in the universal histidine degradation pathway. In Thermoplasma volcanium (strain ATCC 51530 / DSM 4299 / JCM 9571 / NBRC 15438 / GSS1), this protein is Imidazolonepropionase.